Reading from the N-terminus, the 425-residue chain is UDP-N-acetyl-D-glucosamine 6-dehydrogenase (425 aa).

NAD(+) contacts are provided by Val-17, Asp-35, Arg-40, Thr-86, and Thr-121. Cys-261 (nucleophile) is an active-site residue. Arg-332 serves as a coordination point for NAD(+).

Belongs to the UDP-glucose/GDP-mannose dehydrogenase family. Homotrimer.

The catalysed reaction is UDP-N-acetyl-alpha-D-glucosamine + 2 NAD(+) + H2O = UDP-2-acetamido-2-deoxy-alpha-D-glucuronate + 2 NADH + 3 H(+). It participates in capsule biogenesis; capsule polysaccharide biosynthesis. It functions in the pathway glycan metabolism; Vi-antigen biosynthesis. In terms of biological role, dehydrogenase required for the biosynthesis of the capsular polysaccharide, commonly referred as the Vi antigen, an important virulence factor. Catalyzes the conversion of UDP-N-acetylglucosamine (UDP-GlcNAc) to UDP-N-acetylglucosaminuronic acid (UDP-GlcNAcA). Cannot use UDP-GalNAc, UDP-Glc and UDP-Gal as substrates. This Salmonella typhi protein is UDP-N-acetyl-D-glucosamine 6-dehydrogenase.